Reading from the N-terminus, the 492-residue chain is Alpha-2-antiplasmin (492 aa).

Positions 1–22 are cleaved as a signal peptide; sequence MALLWGLLALILSCLSSLCSAQ. A propeptide spanning residues 23 to 40 is cleaved from the precursor; sequence FSPVSTMEPLDLQLMDGQ. The disordered stretch occupies residues 56-76; the sequence is QEPGGQIAPKKAPEDCKLSPT. Cysteine 71 and cysteine 144 form a disulfide bridge. N-linked (GlcNAc...) asparagine glycans are attached at residues asparagine 127, asparagine 249, asparagine 296, asparagine 310, and asparagine 317. The disordered stretch occupies residues 433 to 492; sequence SVRNPNPGAQPERKEQQDSPDGKDSFQDHKGLPRGDKPFDPDLKLGPPSEEDYAQPSSPK. The span at 443–475 shows a compositional bias: basic and acidic residues; the sequence is PERKEQQDSPDGKDSFQDHKGLPRGDKPFDPDL. Tyrosine 485 is subject to Sulfotyrosine.

The protein belongs to the serpin family. As to quaternary structure, forms protease inhibiting heterodimer with TMPRSS7. Post-translationally, proteolytically cleaved at Pro-31 by both the prolyl endopeptidase FAP form and antiplasmin-cleaving enzyme FAP soluble form to generate mature alpha-2-antiplasmin. Expressed by the liver and secreted in plasma.

The protein localises to the secreted. Functionally, serine protease inhibitor. The major targets of this inhibitor are plasmin and trypsin, but it also inactivates matriptase-3/TMPRSS7 and chymotrypsin. This chain is Alpha-2-antiplasmin (SERPINF2), found in Bos taurus (Bovine).